The primary structure comprises 67 residues: DNA-directed RNA polymerase subunit omega (67 aa).

This sequence belongs to the RNA polymerase subunit omega family. In terms of assembly, the RNAP catalytic core consists of 2 alpha, 1 beta, 1 beta' and 1 omega subunit. When a sigma factor is associated with the core the holoenzyme is formed, which can initiate transcription.

It carries out the reaction RNA(n) + a ribonucleoside 5'-triphosphate = RNA(n+1) + diphosphate. Its function is as follows. Promotes RNA polymerase assembly. Latches the N- and C-terminal regions of the beta' subunit thereby facilitating its interaction with the beta and alpha subunits. The sequence is that of DNA-directed RNA polymerase subunit omega from Burkholderia pseudomallei (strain 1106a).